The chain runs to 253 residues: uncharacterized protein (253 aa).

This is an uncharacterized protein from Bacillus subtilis (strain 168).